Consider the following 207-residue polypeptide: Holliday junction branch migration complex subunit RuvA (207 aa).

The interval 1–65 (MYDYIRGTLT…ETEHLLYGFH (65 aa)) is domain I. The segment at 66–144 (SREERECFRI…DLLPLDSRVE (79 aa)) is domain II. Positions 145–150 (TSQTHT) are flexible linker. The tract at residues 150–207 (TTSSCLEEGIQALAALGYSKIAAERMIAEAIKDLPEGSSLTDILPIALKKNFSGVNKD) is domain III.

This sequence belongs to the RuvA family. In terms of assembly, homotetramer. Forms an RuvA(8)-RuvB(12)-Holliday junction (HJ) complex. HJ DNA is sandwiched between 2 RuvA tetramers; dsDNA enters through RuvA and exits via RuvB. An RuvB hexamer assembles on each DNA strand where it exits the tetramer. Each RuvB hexamer is contacted by two RuvA subunits (via domain III) on 2 adjacent RuvB subunits; this complex drives branch migration. In the full resolvosome a probable DNA-RuvA(4)-RuvB(12)-RuvC(2) complex forms which resolves the HJ.

Its subcellular location is the cytoplasm. The RuvA-RuvB-RuvC complex processes Holliday junction (HJ) DNA during genetic recombination and DNA repair, while the RuvA-RuvB complex plays an important role in the rescue of blocked DNA replication forks via replication fork reversal (RFR). RuvA specifically binds to HJ cruciform DNA, conferring on it an open structure. The RuvB hexamer acts as an ATP-dependent pump, pulling dsDNA into and through the RuvAB complex. HJ branch migration allows RuvC to scan DNA until it finds its consensus sequence, where it cleaves and resolves the cruciform DNA. This chain is Holliday junction branch migration complex subunit RuvA, found in Chlamydia pneumoniae (Chlamydophila pneumoniae).